The following is a 413-amino-acid chain: Multifunctional CCA protein (413 aa).

The ATP site is built by glycine 8 and arginine 11. Positions 8 and 11 each coordinate CTP. 2 residues coordinate Mg(2+): aspartate 21 and aspartate 23. Residues arginine 91, arginine 143, and arginine 146 each coordinate ATP. CTP is bound by residues arginine 91, arginine 143, and arginine 146. One can recognise an HD domain in the interval 232-333 (TGVHVMMVVD…VRLFERSDAL (102 aa)).

Belongs to the tRNA nucleotidyltransferase/poly(A) polymerase family. Bacterial CCA-adding enzyme type 1 subfamily. Monomer. Can also form homodimers and oligomers. Mg(2+) serves as cofactor. It depends on Ni(2+) as a cofactor.

It carries out the reaction a tRNA precursor + 2 CTP + ATP = a tRNA with a 3' CCA end + 3 diphosphate. The enzyme catalyses a tRNA with a 3' CCA end + 2 CTP + ATP = a tRNA with a 3' CCACCA end + 3 diphosphate. Functionally, catalyzes the addition and repair of the essential 3'-terminal CCA sequence in tRNAs without using a nucleic acid template. Adds these three nucleotides in the order of C, C, and A to the tRNA nucleotide-73, using CTP and ATP as substrates and producing inorganic pyrophosphate. tRNA 3'-terminal CCA addition is required both for tRNA processing and repair. Also involved in tRNA surveillance by mediating tandem CCA addition to generate a CCACCA at the 3' terminus of unstable tRNAs. While stable tRNAs receive only 3'-terminal CCA, unstable tRNAs are marked with CCACCA and rapidly degraded. This is Multifunctional CCA protein from Burkholderia orbicola (strain MC0-3).